A 237-amino-acid chain; its full sequence is Large ribosomal subunit protein uL1 (237 aa).

Belongs to the universal ribosomal protein uL1 family. In terms of assembly, part of the 50S ribosomal subunit.

In terms of biological role, binds directly to 23S rRNA. The L1 stalk is quite mobile in the ribosome, and is involved in E site tRNA release. Functionally, protein L1 is also a translational repressor protein, it controls the translation of the L11 operon by binding to its mRNA. The polypeptide is Large ribosomal subunit protein uL1 (Synechococcus elongatus (strain ATCC 33912 / PCC 7942 / FACHB-805) (Anacystis nidulans R2)).